Consider the following 130-residue polypeptide: Large ribosomal subunit protein bL19 (130 aa).

It belongs to the bacterial ribosomal protein bL19 family.

This protein is located at the 30S-50S ribosomal subunit interface and may play a role in the structure and function of the aminoacyl-tRNA binding site. This chain is Large ribosomal subunit protein bL19, found in Gluconobacter oxydans (strain 621H) (Gluconobacter suboxydans).